The following is a 177-amino-acid chain: SsrA-binding protein (177 aa).

Disordered regions lie at residues 1–23 and 148–177; these read MYVP…KDGK and YDKR…QRGE. Over residues 148–165 the composition is skewed to basic and acidic residues; sequence YDKRQTLREKQDRRESDR.

The protein belongs to the SmpB family.

It is found in the cytoplasm. In terms of biological role, required for rescue of stalled ribosomes mediated by trans-translation. Binds to transfer-messenger RNA (tmRNA), required for stable association of tmRNA with ribosomes. tmRNA and SmpB together mimic tRNA shape, replacing the anticodon stem-loop with SmpB. tmRNA is encoded by the ssrA gene; the 2 termini fold to resemble tRNA(Ala) and it encodes a 'tag peptide', a short internal open reading frame. During trans-translation Ala-aminoacylated tmRNA acts like a tRNA, entering the A-site of stalled ribosomes, displacing the stalled mRNA. The ribosome then switches to translate the ORF on the tmRNA; the nascent peptide is terminated with the 'tag peptide' encoded by the tmRNA and targeted for degradation. The ribosome is freed to recommence translation, which seems to be the essential function of trans-translation. The polypeptide is SsrA-binding protein (Streptomyces avermitilis (strain ATCC 31267 / DSM 46492 / JCM 5070 / NBRC 14893 / NCIMB 12804 / NRRL 8165 / MA-4680)).